Reading from the N-terminus, the 518-residue chain is Cytochrome P450 CYP72A219 (518 aa).

A helical transmembrane segment spans residues 2 to 22 (ELVLKLISSFCAIVVVILLGW). Cys-465 serves as a coordination point for heme.

It belongs to the cytochrome P450 family. Requires heme as cofactor.

The protein resides in the membrane. Probable heme-thiolate monooxygenase. This chain is Cytochrome P450 CYP72A219, found in Panax ginseng (Korean ginseng).